The primary structure comprises 481 residues: Glutamyl-tRNA(Gln) amidotransferase subunit A (481 aa).

Residues K78 and S153 each act as charge relay system in the active site. S177 functions as the Acyl-ester intermediate in the catalytic mechanism.

The protein belongs to the amidase family. GatA subfamily. In terms of assembly, heterotrimer of A, B and C subunits.

It carries out the reaction L-glutamyl-tRNA(Gln) + L-glutamine + ATP + H2O = L-glutaminyl-tRNA(Gln) + L-glutamate + ADP + phosphate + H(+). Allows the formation of correctly charged Gln-tRNA(Gln) through the transamidation of misacylated Glu-tRNA(Gln) in organisms which lack glutaminyl-tRNA synthetase. The reaction takes place in the presence of glutamine and ATP through an activated gamma-phospho-Glu-tRNA(Gln). This chain is Glutamyl-tRNA(Gln) amidotransferase subunit A, found in Borreliella afzelii (strain PKo) (Borrelia afzelii).